A 114-amino-acid chain; its full sequence is Large ribosomal subunit protein uL18 (114 aa).

Belongs to the universal ribosomal protein uL18 family. As to quaternary structure, part of the 50S ribosomal subunit; part of the 5S rRNA/L5/L18/L25 subcomplex. Contacts the 5S and 23S rRNAs.

Functionally, this is one of the proteins that bind and probably mediate the attachment of the 5S RNA into the large ribosomal subunit, where it forms part of the central protuberance. The protein is Large ribosomal subunit protein uL18 of Porphyromonas gingivalis (strain ATCC 33277 / DSM 20709 / CIP 103683 / JCM 12257 / NCTC 11834 / 2561).